The sequence spans 584 residues: Arginine--tRNA ligase (584 aa).

Residues 126-136 (PNIAKEMHVGH) carry the 'HIGH' region motif.

Belongs to the class-I aminoacyl-tRNA synthetase family. As to quaternary structure, monomer.

The protein resides in the cytoplasm. The enzyme catalyses tRNA(Arg) + L-arginine + ATP = L-arginyl-tRNA(Arg) + AMP + diphosphate. This Synechococcus elongatus (strain ATCC 33912 / PCC 7942 / FACHB-805) (Anacystis nidulans R2) protein is Arginine--tRNA ligase.